The sequence spans 543 residues: Tetrahydroberberine oxidase (543 aa).

A signal peptide spans 1 to 26 (MIPNSSSSSILSLLVLLLFSTSSSWA). Cys-37 and Cys-97 are oxidised to a cystine. Asn-54, Asn-74, Asn-135, Asn-142, Asn-162, Asn-295, Asn-335, Asn-440, and Asn-482 each carry an N-linked (GlcNAc...) asparagine glycan. One can recognise an FAD-binding PCMH-type domain in the interval 75 to 250 (STQKPEFIIT…LSWKVKLVPV (176 aa)). A cross-link (6-(S-cysteinyl)-8alpha-(pros-histidyl)-FAD (His-Cys)) is located at residues 112 to 175 (HDVEGLSYVS…NTLGFPAGFC (64 aa)).

This sequence belongs to the oxygen-dependent FAD-linked oxidoreductase family. FAD serves as cofactor. The FAD cofactor is bound via a bicovalent 6-S-cysteinyl, 8alpha-N1-histidyl FAD linkage.

The enzyme catalyses (S)-canadine + 2 O2 + H(+) = berberine + 2 H2O2. Functionally, catalyzes the oxidation of different tetrahydroprotoberberines, such as (S)-canadine, (S)-scoulerine and (S)-tetrahydropalmatine. This Argemone mexicana (Mexican prickly poppy) protein is Tetrahydroberberine oxidase.